The primary structure comprises 166 residues: MASGVAVSDGVIKVFNDMKVRKSSTPEEVKKRKKAVLFCLSEDKKNIILEEGKEILVGDVGQTVDDPYTTFVKMLPDKDCRYALYDATYETKESKKEDLVFIFWAPENAPLKSKMIYASSKDAIKKKLTGIKHELQANCYEEVKDRCTLAEKLGGSAVISLEGKPL.

At Ala2 the chain carries N-acetylalanine. Phosphoserine is present on residues Ser3 and Ser8. Positions 4–153 (GVAVSDGVIK…KDRCTLAEKL (150 aa)) constitute an ADF-H domain. Lys13 is subject to N6-acetyllysine. A Phosphothreonine modification is found at Thr25. Positions 30–34 (KKRKK) match the Nuclear localization signal motif. Ser41 bears the Phosphoserine mark. At Thr63 the chain carries Phosphothreonine. At Tyr68 the chain carries Phosphotyrosine. The residue at position 73 (Lys73) is an N6-acetyllysine. Tyr82 bears the Phosphotyrosine mark. Lys132 is covalently cross-linked (Glycyl lysine isopeptide (Lys-Gly) (interchain with G-Cter in SUMO2)). Tyr140 carries the post-translational modification Phosphotyrosine. Lys144 carries the N6-acetyllysine modification. Phosphoserine is present on Ser156.

Belongs to the actin-binding proteins ADF family. In terms of assembly, can bind G- and F-actin in a 1:1 ratio of cofilin to actin. It is a major component of intranuclear and cytoplasmic actin rods. Interacts with the subcortical maternal complex (SCMC) via interaction with TLE6 and NLRP5. Interacts with C9orf72. Post-translationally, inactivated by phosphorylation on Ser-3. Phosphorylated on Ser-3 in resting cells. Dephosphorylated by PDXP/chronophin; this restores its activity in promoting actin filament depolymerization. The phosphorylation of Ser-24 may prevent recognition of the nuclear localization signal. Phosphorylated via a ARRB1-RAC1-LIMK1-PAK1 cascade upon active ligand stimulation of atypical chemokine receptor ACKR2. As to expression, widely distributed in various tissues. Not found in skeletal muscle.

Its subcellular location is the nucleus matrix. The protein resides in the cytoplasm. The protein localises to the cytoskeleton. It localises to the cell projection. It is found in the ruffle membrane. Its subcellular location is the lamellipodium membrane. The protein resides in the lamellipodium. The protein localises to the growth cone. It localises to the axon. In terms of biological role, binds to F-actin and exhibits pH-sensitive F-actin depolymerizing activity. In conjunction with the subcortical maternal complex (SCMC), plays an essential role for zygotes to progress beyond the first embryonic cell divisions via regulation of actin dynamics. Required for the centralization of the mitotic spindle and symmetric division of zygotes. Plays a role in the regulation of cell morphology and cytoskeletal organization in epithelial cells. Required for the up-regulation of atypical chemokine receptor ACKR2 from endosomal compartment to cell membrane, increasing its efficiency in chemokine uptake and degradation. Required for neural tube morphogenesis and neural crest cell migration. In Mus musculus (Mouse), this protein is Cofilin-1 (Cfl1).